Here is a 330-residue protein sequence, read N- to C-terminus: Ketol-acid reductoisomerase (NADP(+)) (330 aa).

The KARI N-terminal Rossmann domain occupies 1 to 182; that stretch reads MKKVYYDQDA…GCTRAGVFET (182 aa). Residues 25–28, S51, S53, and 83–86 each bind NADP(+); these read YGSQ and DQIQ. The active site involves H108. G134 lines the NADP(+) pocket. Positions 183–328 constitute a KARI C-terminal knotted domain; it reads TFKEETETDL…AELRQMMPWL (146 aa). Residues D191, E195, E227, and E231 each coordinate Mg(2+). S252 is a binding site for substrate.

It belongs to the ketol-acid reductoisomerase family. It depends on Mg(2+) as a cofactor.

It catalyses the reaction (2R)-2,3-dihydroxy-3-methylbutanoate + NADP(+) = (2S)-2-acetolactate + NADPH + H(+). It carries out the reaction (2R,3R)-2,3-dihydroxy-3-methylpentanoate + NADP(+) = (S)-2-ethyl-2-hydroxy-3-oxobutanoate + NADPH + H(+). It participates in amino-acid biosynthesis; L-isoleucine biosynthesis; L-isoleucine from 2-oxobutanoate: step 2/4. The protein operates within amino-acid biosynthesis; L-valine biosynthesis; L-valine from pyruvate: step 2/4. Its function is as follows. Involved in the biosynthesis of branched-chain amino acids (BCAA). Catalyzes an alkyl-migration followed by a ketol-acid reduction of (S)-2-acetolactate (S2AL) to yield (R)-2,3-dihydroxy-isovalerate. In the isomerase reaction, S2AL is rearranged via a Mg-dependent methyl migration to produce 3-hydroxy-3-methyl-2-ketobutyrate (HMKB). In the reductase reaction, this 2-ketoacid undergoes a metal-dependent reduction by NADPH to yield (R)-2,3-dihydroxy-isovalerate. The polypeptide is Ketol-acid reductoisomerase (NADP(+)) (Carboxydothermus hydrogenoformans (strain ATCC BAA-161 / DSM 6008 / Z-2901)).